The following is a 240-amino-acid chain: DNA repair protein RecO (240 aa).

This sequence belongs to the RecO family.

Functionally, involved in DNA repair and RecF pathway recombination. The chain is DNA repair protein RecO from Actinobacillus pleuropneumoniae serotype 5b (strain L20).